The primary structure comprises 209 residues: Uracil phosphoribosyltransferase (209 aa).

5-phospho-alpha-D-ribose 1-diphosphate-binding positions include R79, R104, and D131–S139. Residues I194 and G199–A201 contribute to the uracil site. D200 contacts 5-phospho-alpha-D-ribose 1-diphosphate.

This sequence belongs to the UPRTase family. The cofactor is Mg(2+).

The enzyme catalyses UMP + diphosphate = 5-phospho-alpha-D-ribose 1-diphosphate + uracil. The protein operates within pyrimidine metabolism; UMP biosynthesis via salvage pathway; UMP from uracil: step 1/1. Its activity is regulated as follows. Allosterically activated by GTP. Catalyzes the conversion of uracil and 5-phospho-alpha-D-ribose 1-diphosphate (PRPP) to UMP and diphosphate. The chain is Uracil phosphoribosyltransferase from Clostridium kluyveri (strain NBRC 12016).